The sequence spans 264 residues: Thymidylate synthase (264 aa).

Residue R21 participates in dUMP binding. H51 contacts (6R)-5,10-methylene-5,6,7,8-tetrahydrofolate. 126-127 (RR) contacts dUMP. Catalysis depends on C146, which acts as the Nucleophile. DUMP contacts are provided by residues 166–169 (RSAD), N177, and 207–209 (HIY). D169 is a (6R)-5,10-methylene-5,6,7,8-tetrahydrofolate binding site. S263 serves as a coordination point for (6R)-5,10-methylene-5,6,7,8-tetrahydrofolate.

It belongs to the thymidylate synthase family. Bacterial-type ThyA subfamily. In terms of assembly, homodimer.

It localises to the cytoplasm. It carries out the reaction dUMP + (6R)-5,10-methylene-5,6,7,8-tetrahydrofolate = 7,8-dihydrofolate + dTMP. The protein operates within pyrimidine metabolism; dTTP biosynthesis. Functionally, catalyzes the reductive methylation of 2'-deoxyuridine-5'-monophosphate (dUMP) to 2'-deoxythymidine-5'-monophosphate (dTMP) while utilizing 5,10-methylenetetrahydrofolate (mTHF) as the methyl donor and reductant in the reaction, yielding dihydrofolate (DHF) as a by-product. This enzymatic reaction provides an intracellular de novo source of dTMP, an essential precursor for DNA biosynthesis. The sequence is that of Thymidylate synthase from Exiguobacterium sp. (strain ATCC BAA-1283 / AT1b).